Reading from the N-terminus, the 257-residue chain is UPF0246 protein YaaA (257 aa).

This sequence belongs to the UPF0246 family.

This chain is UPF0246 protein YaaA, found in Salmonella agona (strain SL483).